A 152-amino-acid polypeptide reads, in one-letter code: Transcriptional regulator MraZ (152 aa).

2 SpoVT-AbrB domains span residues 5 to 52 (ASSL…PLAQ) and 81 to 124 (ATEY…DEAR).

Belongs to the MraZ family. Forms oligomers.

It is found in the cytoplasm. Its subcellular location is the nucleoid. This Pseudoalteromonas translucida (strain TAC 125) protein is Transcriptional regulator MraZ.